Reading from the N-terminus, the 262-residue chain is 26 kDa secreted antigen (262 aa).

The first 21 residues, 1 to 21 (MSVVHKACLIALLFVSSGVAQ), serve as a signal peptide directing secretion. ShKT domains are found at residues 23 to 57 (CMDSASDCAANAGSCFTRPVSQVLQNRCQRTCNTC) and 59 to 93 (CRDEANNCAASINLCQNPTFEPLVRDRCQKTCGLC). Cystine bridges form between Cys-23–Cys-57, Cys-30–Cys-50, Cys-37–Cys-54, Cys-59–Cys-93, Cys-66–Cys-86, and Cys-73–Cys-90.

It belongs to the phosphatidylethanolamine-binding protein family.

It is found in the secreted. Binds phosphatidylethanolamine. In Toxocara canis (Canine roundworm), this protein is 26 kDa secreted antigen (TES-26).